The following is a 240-amino-acid chain: Mitochondrial transcription rescue factor 1 (240 aa).

The transit peptide at Met-1–Leu-83 directs the protein to the mitochondrion. A disordered region spans residues Ser-92–Gly-127. Residues Ala-101–Ser-124 show a composition bias toward acidic residues. A phosphoserine mark is found at Ser-106 and Ser-116. The S4 RNA-binding domain occupies Phe-142–Glu-217.

Monomer. Interacts with POLRMT. Interacts (via S4 domain) with MTRFR (via C-terminus). Associates with mitoribosomal S39 large subunit, peptidyl tRNA and nascent chain.

It localises to the mitochondrion matrix. Functionally, mitochondrial RNA-binding protein involved in mitochondrial transcription regulation. Functions as a protective factor to maintain proper mitochondrial RNA level during stress. Acts at the transcription level and its protective function depends on its RNA binding ability. Part of a mitoribosome-associated quality control pathway that prevents aberrant translation by responding to interruptions during elongation. As heterodimer with MTRF, ejects the unfinished nascent chain and peptidyl transfer RNA (tRNA), respectively, from stalled ribosomes. Recruitment of mitoribosome biogenesis factors to these quality control intermediates suggests additional roles for MTRES1 and MTRF during mitoribosome rescue. The chain is Mitochondrial transcription rescue factor 1 (Mtres1) from Mus musculus (Mouse).